The following is an 86-amino-acid chain: Large ribosomal subunit protein bL27 (86 aa).

Residues Met1–Thr10 are compositionally biased toward gly residues. The segment at Met1–Leu21 is disordered.

This sequence belongs to the bacterial ribosomal protein bL27 family.

This chain is Large ribosomal subunit protein bL27, found in Cupriavidus taiwanensis (strain DSM 17343 / BCRC 17206 / CCUG 44338 / CIP 107171 / LMG 19424 / R1) (Ralstonia taiwanensis (strain LMG 19424)).